Consider the following 110-residue polypeptide: UPF0060 membrane protein Bcep18194_A4425 (110 aa).

Helical transmembrane passes span 9 to 29 (ALFA…WLVL), 34 to 54 (PVWL…LLTL), 66 to 86 (YGGV…GVAL), and 88 to 108 (RWDV…ALQP).

This sequence belongs to the UPF0060 family.

It is found in the cell inner membrane. This is UPF0060 membrane protein Bcep18194_A4425 from Burkholderia lata (strain ATCC 17760 / DSM 23089 / LMG 22485 / NCIMB 9086 / R18194 / 383).